A 391-amino-acid chain; its full sequence is uncharacterized protein (391 aa).

The region spanning 85 to 314 (ATAAFVGFPS…LKEKIYEKLG (230 aa)) is the OBG-type G domain. Residues 91-98 (GFPSVGKS), 137-141 (DAPGI), and 267-270 (NKID) each bind GTP. A TGS domain is found at 314-389 (GFIKIYLKPQ…EDGDILTIVI (76 aa)).

The protein belongs to the TRAFAC class OBG-HflX-like GTPase superfamily. OBG GTPase family.

This is an uncharacterized protein from Methanocaldococcus jannaschii (strain ATCC 43067 / DSM 2661 / JAL-1 / JCM 10045 / NBRC 100440) (Methanococcus jannaschii).